The sequence spans 288 residues: Transformer-2 protein homolog beta (288 aa).

2 disordered regions span residues 1 to 114 (MSDS…RANP) and 196 to 225 (TKRP…YDRG). Ser2 carries the N-acetylserine modification. Residues Ser2, Ser4, and Ser14 each carry the phosphoserine modification. Residues 17–28 (ASRSGSAHGSGK) show a composition bias toward low complexity. Ser29 is subject to Phosphoserine. Thr33 carries the post-translational modification Phosphothreonine. The segment covering 59–109 (RSRRSSRRHYTRSRSRSRSHRRSRSRSYSRDYRRRHSHSHSPMSTRRRHVG) has biased composition (basic residues). 6 positions are modified to phosphoserine: Ser83, Ser85, Ser87, Ser95, Ser97, and Ser99. Thr103 is modified (phosphothreonine). Positions 118 to 196 (CCLGVFGLSL…RRIRVDFSIT (79 aa)) constitute an RRM domain. The tract at residues 193 to 230 (FSITKRPHTPTPGIYMGRPTYGSSRRRDYYDRGYDRGY) is linker. Lys197 is covalently cross-linked (Glycyl lysine isopeptide (Lys-Gly) (interchain with G-Cter in SUMO2)). Residues Thr201 and Thr203 each carry the phosphothreonine modification. Residues Ser215 and Ser237 each carry the phosphoserine modification. Asymmetric dimethylarginine; alternate is present on Arg241. The residue at position 241 (Arg241) is a Dimethylated arginine; alternate. An Omega-N-methylarginine; alternate modification is found at Arg241. Positions 242-288 (GGGGGGGGWRAAQDRDQIYRRRSPSPYYSRGGYRSRSRSRSYSPRRY) are disordered. Basic residues predominate over residues 274–288 (YRSRSRSRSYSPRRY).

This sequence belongs to the splicing factor SR family. As to quaternary structure, found in a pre-mRNA exonic splicing enhancer (ESE) complex with TRA2B/SFRS10, SNRNP70, SNRPA1 and SRRM1. Binds to A3 enhancer proteins SFRS4, SFRS5, SFRS6 and SFRS9. Interacts with CPSF6, RBMY1A1, RBMX, RNPS1 and phosphorylated SFRS13A. Interacts with SAFB/SAFB1. Interacts with ILDR1 (via C-terminus) and ILDR2. In terms of processing, phosphorylated in the RS domains.

The protein localises to the nucleus. Its function is as follows. Sequence-specific RNA-binding protein which participates in the control of pre-mRNA splicing. Can either activate or suppress exon inclusion. Acts additively with RBMX to promote exon 7 inclusion of the survival motor neuron SMN2. Activates the splicing of MAPT/Tau exon 10. Alters pre-mRNA splicing patterns by antagonizing the effects of splicing regulators, like RBMX. Binds to the AG-rich SE2 domain in the SMN exon 7 RNA. Binds to pre-mRNA. This chain is Transformer-2 protein homolog beta (TRA2B), found in Bos taurus (Bovine).